Reading from the N-terminus, the 379-residue chain is Chaperone protein DnaJ (379 aa).

Positions 5-70 constitute a J domain; sequence DYYEILGVSK…QKRAAYDQYG (66 aa). The segment at 134–212 adopts a CR-type zinc-finger fold; it reads GVTKEIRIPT…CHGHGRVEKS (79 aa). Zn(2+) contacts are provided by C147, C150, C164, C167, C186, C189, C200, and C203. CXXCXGXG motif repeat units lie at residues 147–154, 164–171, 186–193, and 200–207; these read CDVCHGSG, CPTCHGSG, CPHCQGRG, and CHKCHGHG.

The protein belongs to the DnaJ family. Homodimer. Zn(2+) serves as cofactor.

It is found in the cytoplasm. Functionally, participates actively in the response to hyperosmotic and heat shock by preventing the aggregation of stress-denatured proteins and by disaggregating proteins, also in an autonomous, DnaK-independent fashion. Unfolded proteins bind initially to DnaJ; upon interaction with the DnaJ-bound protein, DnaK hydrolyzes its bound ATP, resulting in the formation of a stable complex. GrpE releases ADP from DnaK; ATP binding to DnaK triggers the release of the substrate protein, thus completing the reaction cycle. Several rounds of ATP-dependent interactions between DnaJ, DnaK and GrpE are required for fully efficient folding. Also involved, together with DnaK and GrpE, in the DNA replication of plasmids through activation of initiation proteins. The protein is Chaperone protein DnaJ of Salmonella agona (strain SL483).